The sequence spans 365 residues: Peptide chain release factor 2 (365 aa).

Q252 is subject to N5-methylglutamine.

The protein belongs to the prokaryotic/mitochondrial release factor family. Methylated by PrmC. Methylation increases the termination efficiency of RF2.

The protein localises to the cytoplasm. Functionally, peptide chain release factor 2 directs the termination of translation in response to the peptide chain termination codons UGA and UAA. This Yersinia pseudotuberculosis serotype O:1b (strain IP 31758) protein is Peptide chain release factor 2.